Reading from the N-terminus, the 350-residue chain is Biotin synthase (350 aa).

Residues 54–278 enclose the Radical SAM core domain; sequence REIQLSTLLS…TMPQSYVRLS (225 aa). 3 residues coordinate [4Fe-4S] cluster: Cys69, Cys73, and Cys76. Cys113, Cys144, Cys204, and Arg276 together coordinate [2Fe-2S] cluster.

The protein belongs to the radical SAM superfamily. Biotin synthase family. In terms of assembly, homodimer. It depends on [4Fe-4S] cluster as a cofactor. Requires [2Fe-2S] cluster as cofactor.

The catalysed reaction is (4R,5S)-dethiobiotin + (sulfur carrier)-SH + 2 reduced [2Fe-2S]-[ferredoxin] + 2 S-adenosyl-L-methionine = (sulfur carrier)-H + biotin + 2 5'-deoxyadenosine + 2 L-methionine + 2 oxidized [2Fe-2S]-[ferredoxin]. It participates in cofactor biosynthesis; biotin biosynthesis; biotin from 7,8-diaminononanoate: step 2/2. In terms of biological role, catalyzes the conversion of dethiobiotin (DTB) to biotin by the insertion of a sulfur atom into dethiobiotin via a radical-based mechanism. In Neisseria meningitidis serogroup C / serotype 2a (strain ATCC 700532 / DSM 15464 / FAM18), this protein is Biotin synthase.